A 219-amino-acid polypeptide reads, in one-letter code: Small ribosomal subunit protein uS5 (219 aa).

An S5 DRBM domain is found at 52-115; sequence LDDEVLDINM…DVAKLNLISV (64 aa). Positions 196 to 219 are disordered; it reads LRNASQSRTPRRAAAKQREQEVSE.

This sequence belongs to the universal ribosomal protein uS5 family. In terms of assembly, part of the 30S ribosomal subunit. Contacts protein S4.

In terms of biological role, with S4 and S12 plays an important role in translational accuracy. The sequence is that of Small ribosomal subunit protein uS5 from Haloquadratum walsbyi (strain DSM 16790 / HBSQ001).